The primary structure comprises 45 residues: Iota-conotoxin-like R11.13 (45 aa).

4 disulfide bridges follow: cysteine 5-cysteine 19, cysteine 12-cysteine 22, cysteine 18-cysteine 27, and cysteine 21-cysteine 36. D-leucine is present on leucine 43. Arginine 45 is a propeptide (removed by a carboxypeptidase).

The protein belongs to the conotoxin I1 superfamily. Expressed by the venom duct.

Its subcellular location is the secreted. Iota-conotoxins bind to voltage-gated sodium channels (Nav) and act as agonists by shifting the voltage-dependence of activation to more hyperpolarized levels. Produces general excitatory symptoms. The polypeptide is Iota-conotoxin-like R11.13 (Conus radiatus (Rayed cone)).